Consider the following 154-residue polypeptide: Myoglobin (154 aa).

Residues 2–148 (GLSDGEWQLV…FRKDMASNYK (147 aa)) form the Globin domain. S4 is modified (phosphoserine). Nitrite is bound at residue H65. H65 is a binding site for O2. T68 is modified (phosphothreonine). A heme b-binding site is contributed by H94.

The protein belongs to the globin family. In terms of assembly, monomeric.

It localises to the cytoplasm. The protein localises to the sarcoplasm. It carries out the reaction Fe(III)-heme b-[protein] + nitric oxide + H2O = Fe(II)-heme b-[protein] + nitrite + 2 H(+). The enzyme catalyses H2O2 + AH2 = A + 2 H2O. Functionally, monomeric heme protein which primary function is to store oxygen and facilitate its diffusion within muscle tissues. Reversibly binds oxygen through a pentacoordinated heme iron and enables its timely and efficient release as needed during periods of heightened demand. Depending on the oxidative conditions of tissues and cells, and in addition to its ability to bind oxygen, it also has a nitrite reductase activity whereby it regulates the production of bioactive nitric oxide. Under stress conditions, like hypoxia and anoxia, it also protects cells against reactive oxygen species thanks to its pseudoperoxidase activity. The protein is Myoglobin (MB) of Gorilla gorilla beringei (Mountain gorilla).